Here is a 301-residue protein sequence, read N- to C-terminus: Probable serine acetyltransferase 3 (301 aa).

The tract at residues 280–301 (IGKKAEPQRELPGVTMEQRWSD) is disordered.

The protein belongs to the transferase hexapeptide repeat family. As to quaternary structure, homomultimer.

It catalyses the reaction L-serine + acetyl-CoA = O-acetyl-L-serine + CoA. It participates in amino-acid biosynthesis; L-cysteine biosynthesis; L-cysteine from L-serine: step 1/2. The chain is Probable serine acetyltransferase 3 (SAT3) from Oryza sativa subsp. japonica (Rice).